Reading from the N-terminus, the 676-residue chain is tRNA uridine 5-carboxymethylaminomethyl modification enzyme MnmG (676 aa).

15–20 is an FAD binding site; that stretch reads GAGHAG. 316–330 provides a ligand contact to NAD(+); it reads GPRYCPSIEDKIVRF.

This sequence belongs to the MnmG family. As to quaternary structure, homodimer. Heterotetramer of two MnmE and two MnmG subunits. FAD is required as a cofactor.

It is found in the cytoplasm. In terms of biological role, NAD-binding protein involved in the addition of a carboxymethylaminomethyl (cmnm) group at the wobble position (U34) of certain tRNAs, forming tRNA-cmnm(5)s(2)U34. This is tRNA uridine 5-carboxymethylaminomethyl modification enzyme MnmG from Roseiflexus castenholzii (strain DSM 13941 / HLO8).